A 222-amino-acid polypeptide reads, in one-letter code: Sugar fermentation stimulation protein homolog (222 aa).

The protein belongs to the SfsA family.

This Thermoplasma acidophilum (strain ATCC 25905 / DSM 1728 / JCM 9062 / NBRC 15155 / AMRC-C165) protein is Sugar fermentation stimulation protein homolog.